The chain runs to 211 residues: Shikimate kinase (211 aa).

Residues 1–23 (MNASANLCAASDNDPQPGDQEAA) are disordered. 50–55 (GAGKTT) contacts ATP. T54 contacts Mg(2+). Positions 72, 96, and 118 each coordinate substrate. R156 contacts ATP. R175 contributes to the substrate binding site.

This sequence belongs to the shikimate kinase family. As to quaternary structure, monomer. Mg(2+) serves as cofactor.

The protein resides in the cytoplasm. It carries out the reaction shikimate + ATP = 3-phosphoshikimate + ADP + H(+). It participates in metabolic intermediate biosynthesis; chorismate biosynthesis; chorismate from D-erythrose 4-phosphate and phosphoenolpyruvate: step 5/7. Its function is as follows. Catalyzes the specific phosphorylation of the 3-hydroxyl group of shikimic acid using ATP as a cosubstrate. The polypeptide is Shikimate kinase (Bordetella bronchiseptica (strain ATCC BAA-588 / NCTC 13252 / RB50) (Alcaligenes bronchisepticus)).